Here is a 1376-residue protein sequence, read N- to C-terminus: DNA-directed RNA polymerase subunit beta'' (1376 aa).

4 residues coordinate Zn(2+): cysteine 221, cysteine 290, cysteine 297, and cysteine 300. The disordered stretch occupies residues 895–919 (PSGSGFPSDNELDHSNRNPFSSSYP).

Belongs to the RNA polymerase beta' chain family. RpoC2 subfamily. As to quaternary structure, in plastids the minimal PEP RNA polymerase catalytic core is composed of four subunits: alpha, beta, beta', and beta''. When a (nuclear-encoded) sigma factor is associated with the core the holoenzyme is formed, which can initiate transcription. The cofactor is Zn(2+).

The protein localises to the plastid. It localises to the chloroplast. It catalyses the reaction RNA(n) + a ribonucleoside 5'-triphosphate = RNA(n+1) + diphosphate. In terms of biological role, DNA-dependent RNA polymerase catalyzes the transcription of DNA into RNA using the four ribonucleoside triphosphates as substrates. In Pelargonium hortorum (Common geranium), this protein is DNA-directed RNA polymerase subunit beta''.